The primary structure comprises 80 residues: Cytochrome c-553 (80 aa).

Positions 13, 16, 17, and 58 each coordinate heme c.

Binds 1 heme c group covalently per subunit.

It localises to the periplasm. Functionally, natural electron acceptor for a formate dehydrogenase. In Desulfomicrobium norvegicum (strain DSM 1741 / NCIMB 8310) (Desulfovibrio baculatus (strain Norway 4)), this protein is Cytochrome c-553.